A 74-amino-acid polypeptide reads, in one-letter code: Ferredoxin-like protein in nif region (74 aa).

Positions 2-30 (PFKIIASQCTSCSACEPLCPNVAISEKGG) constitute a 4Fe-4S ferredoxin-type domain. [4Fe-4S] cluster is bound by residues Cys-10, Cys-13, Cys-16, Cys-20, Cys-39, Cys-51, and Cys-55.

[4Fe-4S] cluster is required as a cofactor.

The sequence is that of Ferredoxin-like protein in nif region (frxA) from Bradyrhizobium diazoefficiens (strain JCM 10833 / BCRC 13528 / IAM 13628 / NBRC 14792 / USDA 110).